Consider the following 130-residue polypeptide: MAKRVKRAGRKREKKHVERGIAHIHSTFNNTIVTITDPAGNTISWASAGTIGFKGSRKSTPFAAQMAAESAAKSAMEHGMKTVDVYVKGPGAGREAAIRALQAAGLEVSLIKDVTPIPHNGCRPPKRRRV.

This sequence belongs to the universal ribosomal protein uS11 family. As to quaternary structure, part of the 30S ribosomal subunit. Interacts with proteins S7 and S18. Binds to IF-3.

Its function is as follows. Located on the platform of the 30S subunit, it bridges several disparate RNA helices of the 16S rRNA. Forms part of the Shine-Dalgarno cleft in the 70S ribosome. The sequence is that of Small ribosomal subunit protein uS11 from Thermoanaerobacter sp. (strain X514).